A 474-amino-acid polypeptide reads, in one-letter code: Lipoprotein lipase (474 aa).

A signal peptide spans Met1–Ala27. Residues Arg32–Thr53 form an interaction with GPIHBP1 region. Cys54 and Cys67 are oxidised to a cystine. N-linked (GlcNAc...) asparagine glycosylation occurs at Asn70. Position 121 is a 3'-nitrotyrosine (Tyr121). Ser159 serves as the catalytic Nucleophile. Asp183 functions as the Charge relay system in the catalytic mechanism. A 3'-nitrotyrosine modification is found at Tyr191. Residues Ala194, Arg197, Ser199, and Asp202 each contribute to the Ca(2+) site. Cys243 and Cys266 are disulfide-bonded. Residues Cys243–Cys266 are essential for determining substrate specificity. His268 (charge relay system) is an active-site residue. Intrachain disulfides connect Cys291-Cys310 and Cys302-Cys305. The region spanning Phe341–Lys464 is the PLAT domain. Tyr343 is subject to 3'-nitrotyrosine. The N-linked (GlcNAc...) asparagine glycan is linked to Asn386. The segment at Trp417–Trp421 is important for interaction with lipoprotein particles. An important for heparin binding region spans residues Arg430–Lys434. The interval Ile443–Asp467 is interaction with GPIHBP1. A disulfide bridge connects residues Cys445 and Cys465.

It belongs to the AB hydrolase superfamily. Lipase family. As to quaternary structure, homodimer. Interacts with GPIHBP1 with 1:1 stoichiometry. Interacts with APOC2; the interaction activates LPL activity in the presence of lipids. Interaction with heparan sulfate proteoglycans is required to protect LPL against loss of activity. Associates with lipoprotein particles in blood plasma. Interacts with LMF1 and SEL1L; interaction with SEL1L is required to prevent aggregation of newly synthesized LPL in the endoplasmic reticulum (ER), and for normal export of LPL from the ER to the extracellular space. Interacts with SORL1; SORL1 acts as a sorting receptor, promoting LPL localization to endosomes and later to lysosomes, leading to degradation of newly synthesized LPL. Tyrosine nitration after lipopolysaccharide (LPS) challenge down-regulates the lipase activity. Post-translationally, N-glycosylated. As to expression, detected in white and brown adipose tissue and heart muscle, especially at the lumenal surface of capillaries. Detected on capillary endothelium in the lactating mammary gland. Detected in blood plasma (at protein level). Expressed in liver, epididymal fat, heart, psoas muscle, lactating mammary gland, adrenal, lung, and ovary. Highest levels in heart and adrenal gland.

The protein resides in the cell membrane. Its subcellular location is the secreted. The protein localises to the extracellular space. It is found in the extracellular matrix. It catalyses the reaction a triacylglycerol + H2O = a diacylglycerol + a fatty acid + H(+). It carries out the reaction a 1,2-diacyl-sn-glycero-3-phosphocholine + H2O = a 2-acyl-sn-glycero-3-phosphocholine + a fatty acid + H(+). The enzyme catalyses 1,2,3-tri-(9Z-octadecenoyl)-glycerol + H2O = di-(9Z)-octadecenoylglycerol + (9Z)-octadecenoate + H(+). The catalysed reaction is 1,2-di-(9Z-octadecenoyl)-sn-glycero-3-phosphocholine + H2O = (9Z-octadecenoyl)-sn-glycero-3-phosphocholine + (9Z)-octadecenoate + H(+). It catalyses the reaction 1,2,3-tributanoylglycerol + H2O = dibutanoylglycerol + butanoate + H(+). It carries out the reaction 1,2-dihexadecanoyl-sn-glycero-3-phosphocholine + H2O = hexadecanoyl-sn-glycero-3-phosphocholine + hexadecanoate + H(+). With respect to regulation, the apolipoprotein APOC2 acts as a coactivator of LPL activity. Ca(2+) binding promotes protein stability and formation of the active homodimer. Interaction with GPIHBP1 protects LPL against inactivation by ANGPTL4. Functionally, key enzyme in triglyceride metabolism. Catalyzes the hydrolysis of triglycerides from circulating chylomicrons and very low density lipoproteins (VLDL), and thereby plays an important role in lipid clearance from the blood stream, lipid utilization and storage. Although it has both phospholipase and triglyceride lipase activities it is primarily a triglyceride lipase with low but detectable phospholipase activity. Mediates margination of triglyceride-rich lipoprotein particles in capillaries. Recruited to its site of action on vascular endothelium by binding to GPIHBP1 and cell surface heparan sulfate proteoglycans. The chain is Lipoprotein lipase (Lpl) from Mus musculus (Mouse).